The chain runs to 447 residues: Ribosomal protein uS12 methylthiotransferase RimO (447 aa).

In terms of domain architecture, MTTase N-terminal spans 10 to 120 (PKVGFVSLGC…VVNAVHDVVP (111 aa)). 6 residues coordinate [4Fe-4S] cluster: C19, C55, C84, C153, C157, and C160. The region spanning 139–377 (LTPRHYAYLK…MAHQQAISAA (239 aa)) is the Radical SAM core domain. The TRAM domain maps to 380–447 (QMKIGKEIEV…DEYDLWAEML (68 aa)).

The protein belongs to the methylthiotransferase family. RimO subfamily. The cofactor is [4Fe-4S] cluster.

The protein resides in the cytoplasm. It catalyses the reaction L-aspartate(89)-[ribosomal protein uS12]-hydrogen + (sulfur carrier)-SH + AH2 + 2 S-adenosyl-L-methionine = 3-methylsulfanyl-L-aspartate(89)-[ribosomal protein uS12]-hydrogen + (sulfur carrier)-H + 5'-deoxyadenosine + L-methionine + A + S-adenosyl-L-homocysteine + 2 H(+). Catalyzes the methylthiolation of an aspartic acid residue of ribosomal protein uS12. This chain is Ribosomal protein uS12 methylthiotransferase RimO, found in Pseudomonas syringae pv. syringae (strain B728a).